Consider the following 359-residue polypeptide: WW domain-binding protein wbp-11 (359 aa).

3 disordered regions span residues 1–38, 235–264, and 317–341; these read MPSISKTKSGERYRAPTDQARKMDRKKENKRNKKDRQQ, PSSYNSMPTRMPHHHHHHHPHASSHYNPMG, and PGDNKTIVPRQAAPVQRRPEVQKQA. A compositionally biased stretch (basic and acidic residues) spans 8–27; the sequence is KSGERYRAPTDQARKMDRKK. Residues 245–256 are compositionally biased toward basic residues; sequence MPHHHHHHHPHA.

Functionally, activates pre-mRNA splicing. May inhibit PP1 phosphatase activity. This chain is WW domain-binding protein wbp-11, found in Caenorhabditis elegans.